The chain runs to 269 residues: Dynein regulatory complex protein 8 (269 aa).

Positions 1–113 (MLGPGQVRLR…RTGKGLGYNS (113 aa)) are disordered. The segment covering 54-76 (AQGSSSPGIQSGPSSRPGSPRGA) has biased composition (low complexity). EF-hand domains lie at 150–185 (EFHK…LGCC) and 228–263 (IPED…EDGV).

It belongs to the DRC8 family. In terms of assembly, component of the nexin-dynein regulatory complex (N-DRC).

It is found in the cytoplasm. Its subcellular location is the cytoskeleton. It localises to the flagellum axoneme. Functionally, component of the nexin-dynein regulatory complex (N-DRC), a key regulator of ciliary/flagellar motility which maintains the alignment and integrity of the distal axoneme and regulates microtubule sliding in motile axonemes. The sequence is that of Dynein regulatory complex protein 8 (EFCAB2) from Homo sapiens (Human).